The sequence spans 212 residues: Phosphatidylserine decarboxylase proenzyme (212 aa).

Catalysis depends on S182, which acts as the Schiff-base intermediate with substrate; via pyruvic acid. Pyruvic acid (Ser); by autocatalysis is present on S182.

This sequence belongs to the phosphatidylserine decarboxylase family. PSD-A subfamily. Heterodimer of a large membrane-associated beta subunit and a small pyruvoyl-containing alpha subunit. The cofactor is pyruvate. Is synthesized initially as an inactive proenzyme. Formation of the active enzyme involves a self-maturation process in which the active site pyruvoyl group is generated from an internal serine residue via an autocatalytic post-translational modification. Two non-identical subunits are generated from the proenzyme in this reaction, and the pyruvate is formed at the N-terminus of the alpha chain, which is derived from the carboxyl end of the proenzyme. The post-translation cleavage follows an unusual pathway, termed non-hydrolytic serinolysis, in which the side chain hydroxyl group of the serine supplies its oxygen atom to form the C-terminus of the beta chain, while the remainder of the serine residue undergoes an oxidative deamination to produce ammonia and the pyruvoyl prosthetic group on the alpha chain.

It is found in the cell membrane. The catalysed reaction is a 1,2-diacyl-sn-glycero-3-phospho-L-serine + H(+) = a 1,2-diacyl-sn-glycero-3-phosphoethanolamine + CO2. It participates in phospholipid metabolism; phosphatidylethanolamine biosynthesis; phosphatidylethanolamine from CDP-diacylglycerol: step 2/2. Functionally, catalyzes the formation of phosphatidylethanolamine (PtdEtn) from phosphatidylserine (PtdSer). The sequence is that of Phosphatidylserine decarboxylase proenzyme from Chlorobium chlorochromatii (strain CaD3).